The following is an 82-amino-acid chain: Small ribosomal subunit protein uS17 (82 aa).

It belongs to the universal ribosomal protein uS17 family. As to quaternary structure, part of the 30S ribosomal subunit.

In terms of biological role, one of the primary rRNA binding proteins, it binds specifically to the 5'-end of 16S ribosomal RNA. The protein is Small ribosomal subunit protein uS17 of Thermosynechococcus vestitus (strain NIES-2133 / IAM M-273 / BP-1).